The chain runs to 350 residues: MTVTPLGVPTISRPAAGMPTTGPLVDTFGRIATDLRVSLTDRCNLRCTYCMPAEGLDWLPGEQLLSADELIRLLRIAVTRLGITNVRFTGGEPLVVRHLEDVVAATGALRPRPEMAMTTNGIGLAKRARALKAAGLDRVNVSLDSVDAAHFARITRRDRLGDVLAGLAAAKEAGLTPVKVNAVLDPDTGLDDAVSLLRYCLDHGYQLRIIEQMPLDAEHQWQRGRSLEAAGILAALRAHFTLVPDSKPRGSAPAQLWRVDGGTATVGVIASVSEAFCAACDRTRLTADGQVRNCLFAREESDLRRLLRGGADDDAIEQAWRAAMWTKAAGHGINDPGFEQPSRPMSAIGG.

The Radical SAM core domain maps to 27 to 245; it reads TFGRIATDLR…LRAHFTLVPD (219 aa). Arginine 36 is a binding site for GTP. 2 residues coordinate [4Fe-4S] cluster: cysteine 43 and cysteine 47. Tyrosine 49 is an S-adenosyl-L-methionine binding site. Cysteine 50 contacts [4Fe-4S] cluster. Position 87 (arginine 87) interacts with GTP. S-adenosyl-L-methionine is bound at residue glycine 91. Residue threonine 118 coordinates GTP. Serine 142 contributes to the S-adenosyl-L-methionine binding site. Lysine 179 serves as a coordination point for GTP. Residue methionine 213 participates in S-adenosyl-L-methionine binding. The [4Fe-4S] cluster site is built by cysteine 277 and cysteine 280. 282-284 is a GTP binding site; that stretch reads RTR. Cysteine 294 contributes to the [4Fe-4S] cluster binding site.

Belongs to the radical SAM superfamily. MoaA family. In terms of assembly, monomer and homodimer. Requires [4Fe-4S] cluster as cofactor.

It catalyses the reaction GTP + AH2 + S-adenosyl-L-methionine = (8S)-3',8-cyclo-7,8-dihydroguanosine 5'-triphosphate + 5'-deoxyadenosine + L-methionine + A + H(+). It functions in the pathway cofactor biosynthesis; molybdopterin biosynthesis. Its function is as follows. Catalyzes the cyclization of GTP to (8S)-3',8-cyclo-7,8-dihydroguanosine 5'-triphosphate. The polypeptide is GTP 3',8-cyclase (Mycobacterium sp. (strain JLS)).